Reading from the N-terminus, the 427-residue chain is UPF0597 protein FN1147 (427 aa).

This sequence belongs to the UPF0597 family.

This Fusobacterium nucleatum subsp. nucleatum (strain ATCC 25586 / DSM 15643 / BCRC 10681 / CIP 101130 / JCM 8532 / KCTC 2640 / LMG 13131 / VPI 4355) protein is UPF0597 protein FN1147.